We begin with the raw amino-acid sequence, 86 residues long: Protein Tat (86 aa).

Residues 1-24 (MEPVDPRLEPWKHPGSQPKTACTN) form an interaction with human CREBBP region. The transactivation stretch occupies residues 1 to 48 (MEPVDPRLEPWKHPGSQPKTACTNCYCKKCCFHCQVCFITKALGISYG). Positions 22, 25, and 27 each coordinate Zn(2+). Residues 22–37 (CTNCYCKKCCFHCQVC) form a cysteine-rich region. Lysine 28 carries the post-translational modification N6-acetyllysine; by host PCAF. 4 residues coordinate Zn(2+): cysteine 30, histidine 33, cysteine 34, and cysteine 37. The core stretch occupies residues 38-48 (FITKALGISYG). The span at 48 to 58 (GRKKRRQRRRA) shows a compositional bias: basic residues. The disordered stretch occupies residues 48–86 (GRKKRRQRRRAPQGSQTHQVSLSKQPTSQSRGDPTGPKE). The short motif at 49-57 (RKKRRQRRR) is the Nuclear localization signal, RNA-binding (TAR), and protein transduction element. Residues 49–86 (RKKRRQRRRAPQGSQTHQVSLSKQPTSQSRGDPTGPKE) form an interaction with the host capping enzyme RNGTT region. N6-acetyllysine; by host EP300 and GCN5L2 occurs at positions 50 and 51. Asymmetric dimethylarginine; by host PRMT6 occurs at positions 52 and 53. Over residues 60–79 (QGSQTHQVSLSKQPTSQSRG) the composition is skewed to polar residues. Lysine 71 participates in a covalent cross-link: Glycyl lysine isopeptide (Lys-Gly) (interchain with G-Cter in ubiquitin). Residues 78-80 (RGD) carry the Cell attachment site motif.

Belongs to the lentiviruses Tat family. In terms of assembly, interacts with host CCNT1. Associates with the P-TEFb complex composed at least of Tat, P-TEFb (CDK9 and CCNT1), TAR RNA, RNA Pol II. Recruits the HATs CREBBP, TAF1/TFIID, EP300, PCAF and GCN5L2. Interacts with host KAT5/Tip60; this interaction targets the latter to degradation. Interacts with the host deacetylase SIRT1. Interacts with host capping enzyme RNGTT; this interaction stimulates RNGTT. Binds to host KDR, and to the host integrins ITGAV/ITGB3 and ITGA5/ITGB1. Interacts with host KPNB1/importin beta-1 without previous binding to KPNA1/importin alpha-1. Interacts with EIF2AK2. Interacts with host nucleosome assembly protein NAP1L1; this interaction may be required for the transport of Tat within the nucleus, since the two proteins interact at the nuclear rim. Interacts with host C1QBP/SF2P32; this interaction involves lysine-acetylated Tat. Interacts with the host chemokine receptors CCR2, CCR3 and CXCR4. Interacts with host DPP4/CD26; this interaction may trigger an anti-proliferative effect. Interacts with host LDLR. Interacts with the host extracellular matrix metalloproteinase MMP1. Interacts with host PRMT6; this interaction mediates Tat's methylation. Interacts with, and is ubiquitinated by MDM2/Hdm2. Interacts with host PSMC3 and HTATIP2. Interacts with STAB1; this interaction may overcome SATB1-mediated repression of IL2 and IL2RA (interleukin) in T cells by binding to the same domain than HDAC1. Interacts (when acetylated) with human CDK13, thereby increasing HIV-1 mRNA splicing and promoting the production of the doubly spliced HIV-1 protein Nef. Interacts with host TBP; this interaction modulates the activity of transcriptional pre-initiation complex. Interacts with host RELA. Interacts with host PLSCR1; this interaction negatively regulates Tat transactivation activity by altering its subcellular distribution. Asymmetrical arginine methylation by host PRMT6 seems to diminish the transactivation capacity of Tat and affects the interaction with host CCNT1. Post-translationally, acetylation by EP300, CREBBP, GCN5L2/GCN5 and PCAF regulates the transactivation activity of Tat. EP300-mediated acetylation of Lys-50 promotes dissociation of Tat from the TAR RNA through the competitive binding to PCAF's bromodomain. In addition, the non-acetylated Tat's N-terminus can also interact with PCAF. PCAF-mediated acetylation of Lys-28 enhances Tat's binding to CCNT1. Lys-50 is deacetylated by SIRT1. In terms of processing, polyubiquitination by host MDM2 does not target Tat to degradation, but activates its transactivation function and fosters interaction with CCNT1 and TAR RNA. Phosphorylated by EIF2AK2 on serine and threonine residues adjacent to the basic region important for TAR RNA binding and function. Phosphorylation of Tat by EIF2AK2 is dependent on the prior activation of EIF2AK2 by dsRNA.

It localises to the host nucleus. The protein localises to the host nucleolus. Its subcellular location is the host cytoplasm. The protein resides in the secreted. Transcriptional activator that increases RNA Pol II processivity, thereby increasing the level of full-length viral transcripts. Recognizes a hairpin structure at the 5'-LTR of the nascent viral mRNAs referred to as the transactivation responsive RNA element (TAR) and recruits the cyclin T1-CDK9 complex (P-TEFb complex) that will in turn hyperphosphorylate the RNA polymerase II to allow efficient elongation. The CDK9 component of P-TEFb and other Tat-activated kinases hyperphosphorylate the C-terminus of RNA Pol II that becomes stabilized and much more processive. Other factors such as HTATSF1/Tat-SF1, SUPT5H/SPT5, and HTATIP2 are also important for Tat's function. Besides its effect on RNA Pol II processivity, Tat induces chromatin remodeling of proviral genes by recruiting the histone acetyltransferases (HATs) CREBBP, EP300 and PCAF to the chromatin. This also contributes to the increase in proviral transcription rate, especially when the provirus integrates in transcriptionally silent region of the host genome. To ensure maximal activation of the LTR, Tat mediates nuclear translocation of NF-kappa-B by interacting with host RELA. Through its interaction with host TBP, Tat may also modulate transcription initiation. Tat can reactivate a latently infected cell by penetrating in it and transactivating its LTR promoter. In the cytoplasm, Tat is thought to act as a translational activator of HIV-1 mRNAs. Its function is as follows. Extracellular circulating Tat can be endocytosed by surrounding uninfected cells via the binding to several surface receptors such as CD26, CXCR4, heparan sulfate proteoglycans (HSPG) or LDLR. Neurons are rarely infected, but they internalize Tat via their LDLR. Through its interaction with nuclear HATs, Tat is potentially able to control the acetylation-dependent cellular gene expression. Modulates the expression of many cellular genes involved in cell survival, proliferation or in coding for cytokines or cytokine receptors. Tat plays a role in T-cell and neurons apoptosis. Tat induced neurotoxicity and apoptosis probably contribute to neuroAIDS. Circulating Tat also acts as a chemokine-like and/or growth factor-like molecule that binds to specific receptors on the surface of the cells, affecting many cellular pathways. In the vascular system, Tat binds to ITGAV/ITGB3 and ITGA5/ITGB1 integrins dimers at the surface of endothelial cells and competes with bFGF for heparin-binding sites, leading to an excess of soluble bFGF. This Human immunodeficiency virus type 1 group M subtype B (isolate PCV12) (HIV-1) protein is Protein Tat.